The primary structure comprises 821 residues: Tip elongation aberrant protein Tea4 (821 aa).

Polar residues-rich tracts occupy residues methionine 1–aspartate 11 and aspartate 21–isoleucine 31. The tract at residues methionine 1–serine 36 is disordered. Position 35 is a phosphotyrosine (tyrosine 35). Serine 36 carries the phosphoserine modification. Residue tyrosine 40 is modified to Phosphotyrosine. A disordered region spans residues isoleucine 51–serine 79. Residues glycine 53–serine 67 are compositionally biased toward polar residues. Residues isoleucine 130–glutamate 191 form the SH3 domain. Disordered stretches follow at residues leucine 267–threonine 292, serine 333–alanine 352, aspartate 473–asparagine 500, serine 529–leucine 570, and aspartate 664–serine 697. Positions glutamate 268–glutamate 282 are enriched in low complexity. Residues tyrosine 283 to threonine 292 show a composition bias toward basic and acidic residues. Composition is skewed to polar residues over residues serine 333–serine 350 and aspartate 473–alanine 484. An interaction with tea1 region spans residues leucine 527–arginine 821. A compositionally biased stretch (low complexity) spans serine 529–proline 541. Residues glutamate 554–glutamate 563 are compositionally biased toward basic and acidic residues. Residues lysine 599–arginine 821 form an interaction with win1 region. Residues alanine 665–isoleucine 674 show a composition bias toward low complexity. A compositionally biased stretch (basic and acidic residues) spans serine 675–glutamate 687.

An essential component of the tea1 cell-end complex. Interacts with win1, tea1 and for3. Interacts with tip1 in the presence of tea1.

It localises to the cytoplasm. Its subcellular location is the cytoskeleton. Its function is as follows. Cell polarity factor essential for the bipolar localization and function of structures containing the cell-end marker tea1 during the normal cell cycle. Regulates cell polarity in complex with tea1 and together with the stress signaling MAPK cascade, contributes to cell polarity maintenance under stress conditions. Required for the localization of for3 at the cell tip specifically during initiation of bipolar growth. During the new end take off (NETO), formation of a protein complex that includes tea1, tea4 and for3 is necessary and sufficient for the establishment of cell polarity and localized actin assembly at new cell ends. This chain is Tip elongation aberrant protein Tea4, found in Schizosaccharomyces pombe (strain 972 / ATCC 24843) (Fission yeast).